The primary structure comprises 874 residues: Leucine--tRNA ligase (874 aa).

Positions 43–53 (PYPSGRIHIGH) match the 'HIGH' region motif. Positions 630–634 (KMSKS) match the 'KMSKS' region motif. Lysine 633 is a binding site for ATP.

This sequence belongs to the class-I aminoacyl-tRNA synthetase family.

It is found in the cytoplasm. It carries out the reaction tRNA(Leu) + L-leucine + ATP = L-leucyl-tRNA(Leu) + AMP + diphosphate. The polypeptide is Leucine--tRNA ligase (Bradyrhizobium diazoefficiens (strain JCM 10833 / BCRC 13528 / IAM 13628 / NBRC 14792 / USDA 110)).